Reading from the N-terminus, the 242-residue chain is Argininosuccinate synthase (242 aa).

Belongs to the argininosuccinate synthase family. Type 2 subfamily. Homotetramer.

It is found in the cytoplasm. It catalyses the reaction L-citrulline + L-aspartate + ATP = 2-(N(omega)-L-arginino)succinate + AMP + diphosphate + H(+). Its pathway is amino-acid biosynthesis; L-arginine biosynthesis; L-arginine from L-ornithine and carbamoyl phosphate: step 2/3. The polypeptide is Argininosuccinate synthase (argG) (Dickeya chrysanthemi (Pectobacterium chrysanthemi)).